A 306-amino-acid polypeptide reads, in one-letter code: Agmatinase (306 aa).

Mn(2+) is bound by residues H126, D149, H151, D153, D230, and D232.

This sequence belongs to the arginase family. Agmatinase subfamily. Mn(2+) serves as cofactor.

It carries out the reaction agmatine + H2O = urea + putrescine. It participates in amine and polyamine biosynthesis; putrescine biosynthesis via agmatine pathway; putrescine from agmatine: step 1/1. Its function is as follows. Catalyzes the formation of putrescine from agmatine. The protein is Agmatinase of Salmonella agona (strain SL483).